Here is a 179-residue protein sequence, read N- to C-terminus: Large ribosomal subunit protein uL5 (179 aa).

It belongs to the universal ribosomal protein uL5 family. As to quaternary structure, part of the 50S ribosomal subunit; part of the 5S rRNA/L5/L18/L25 subcomplex. Contacts the 5S rRNA and the P site tRNA. Forms a bridge to the 30S subunit in the 70S ribosome.

This is one of the proteins that bind and probably mediate the attachment of the 5S RNA into the large ribosomal subunit, where it forms part of the central protuberance. In the 70S ribosome it contacts protein S13 of the 30S subunit (bridge B1b), connecting the 2 subunits; this bridge is implicated in subunit movement. Contacts the P site tRNA; the 5S rRNA and some of its associated proteins might help stabilize positioning of ribosome-bound tRNAs. The sequence is that of Large ribosomal subunit protein uL5 from Buchnera aphidicola subsp. Baizongia pistaciae (strain Bp).